Reading from the N-terminus, the 446-residue chain is Light-independent protochlorophyllide reductase subunit N (446 aa).

[4Fe-4S] cluster is bound by residues Cys22, Cys47, and Cys107.

The protein belongs to the BchN/ChlN family. Protochlorophyllide reductase is composed of three subunits; ChlL, ChlN and ChlB. Forms a heterotetramer of two ChlB and two ChlN subunits. [4Fe-4S] cluster is required as a cofactor.

The protein resides in the plastid. It is found in the chloroplast. It carries out the reaction chlorophyllide a + oxidized 2[4Fe-4S]-[ferredoxin] + 2 ADP + 2 phosphate = protochlorophyllide a + reduced 2[4Fe-4S]-[ferredoxin] + 2 ATP + 2 H2O. The protein operates within porphyrin-containing compound metabolism; chlorophyll biosynthesis (light-independent). In terms of biological role, component of the dark-operative protochlorophyllide reductase (DPOR) that uses Mg-ATP and reduced ferredoxin to reduce ring D of protochlorophyllide (Pchlide) to form chlorophyllide a (Chlide). This reaction is light-independent. The NB-protein (ChlN-ChlB) is the catalytic component of the complex. In Mesostigma viride (Green alga), this protein is Light-independent protochlorophyllide reductase subunit N.